The chain runs to 785 residues: Endonuclease MutS2 (785 aa).

An ATP-binding site is contributed by 335–342 (GPNTGGKT). Residues 710–785 (LDLRGERYED…GNGVTIVEFK (76 aa)) enclose the Smr domain.

Belongs to the DNA mismatch repair MutS family. MutS2 subfamily. As to quaternary structure, homodimer. Binds to stalled ribosomes, contacting rRNA.

Functionally, endonuclease that is involved in the suppression of homologous recombination and thus may have a key role in the control of bacterial genetic diversity. Its function is as follows. Acts as a ribosome collision sensor, splitting the ribosome into its 2 subunits. Detects stalled/collided 70S ribosomes which it binds and splits by an ATP-hydrolysis driven conformational change. Acts upstream of the ribosome quality control system (RQC), a ribosome-associated complex that mediates the extraction of incompletely synthesized nascent chains from stalled ribosomes and their subsequent degradation. Probably generates substrates for RQC. This chain is Endonuclease MutS2, found in Listeria welshimeri serovar 6b (strain ATCC 35897 / DSM 20650 / CCUG 15529 / CIP 8149 / NCTC 11857 / SLCC 5334 / V8).